Consider the following 309-residue polypeptide: 4-hydroxy-3-methylbut-2-enyl diphosphate reductase (309 aa).

Residue Cys-13 coordinates [4Fe-4S] cluster. 2 residues coordinate (2E)-4-hydroxy-3-methylbut-2-enyl diphosphate: His-42 and His-75. Dimethylallyl diphosphate contacts are provided by His-42 and His-75. Residues His-42 and His-75 each contribute to the isopentenyl diphosphate site. A [4Fe-4S] cluster-binding site is contributed by Cys-97. Residue His-125 participates in (2E)-4-hydroxy-3-methylbut-2-enyl diphosphate binding. His-125 contributes to the dimethylallyl diphosphate binding site. His-125 contacts isopentenyl diphosphate. Glu-127 acts as the Proton donor in catalysis. Thr-165 contacts (2E)-4-hydroxy-3-methylbut-2-enyl diphosphate. Cys-195 is a binding site for [4Fe-4S] cluster. (2E)-4-hydroxy-3-methylbut-2-enyl diphosphate-binding residues include Ser-223, Ser-224, Asn-225, and Ser-267. Residues Ser-223, Ser-224, Asn-225, and Ser-267 each contribute to the dimethylallyl diphosphate site. 4 residues coordinate isopentenyl diphosphate: Ser-223, Ser-224, Asn-225, and Ser-267.

Belongs to the IspH family. [4Fe-4S] cluster is required as a cofactor.

It carries out the reaction isopentenyl diphosphate + 2 oxidized [2Fe-2S]-[ferredoxin] + H2O = (2E)-4-hydroxy-3-methylbut-2-enyl diphosphate + 2 reduced [2Fe-2S]-[ferredoxin] + 2 H(+). It catalyses the reaction dimethylallyl diphosphate + 2 oxidized [2Fe-2S]-[ferredoxin] + H2O = (2E)-4-hydroxy-3-methylbut-2-enyl diphosphate + 2 reduced [2Fe-2S]-[ferredoxin] + 2 H(+). The protein operates within isoprenoid biosynthesis; dimethylallyl diphosphate biosynthesis; dimethylallyl diphosphate from (2E)-4-hydroxy-3-methylbutenyl diphosphate: step 1/1. It functions in the pathway isoprenoid biosynthesis; isopentenyl diphosphate biosynthesis via DXP pathway; isopentenyl diphosphate from 1-deoxy-D-xylulose 5-phosphate: step 6/6. Its function is as follows. Catalyzes the conversion of 1-hydroxy-2-methyl-2-(E)-butenyl 4-diphosphate (HMBPP) into a mixture of isopentenyl diphosphate (IPP) and dimethylallyl diphosphate (DMAPP). Acts in the terminal step of the DOXP/MEP pathway for isoprenoid precursor biosynthesis. This is 4-hydroxy-3-methylbut-2-enyl diphosphate reductase from Chlamydia felis (strain Fe/C-56) (Chlamydophila felis).